Reading from the N-terminus, the 511-residue chain is ATP synthase subunit alpha (511 aa).

170 to 177 (GDRQTGKT) lines the ATP pocket.

The protein belongs to the ATPase alpha/beta chains family. F-type ATPases have 2 components, CF(1) - the catalytic core - and CF(0) - the membrane proton channel. CF(1) has five subunits: alpha(3), beta(3), gamma(1), delta(1), epsilon(1). CF(0) has three main subunits: a(1), b(2) and c(9-12). The alpha and beta chains form an alternating ring which encloses part of the gamma chain. CF(1) is attached to CF(0) by a central stalk formed by the gamma and epsilon chains, while a peripheral stalk is formed by the delta and b chains.

It is found in the cell inner membrane. The catalysed reaction is ATP + H2O + 4 H(+)(in) = ADP + phosphate + 5 H(+)(out). Functionally, produces ATP from ADP in the presence of a proton gradient across the membrane. The alpha chain is a regulatory subunit. In Pelagibacter ubique (strain HTCC1062), this protein is ATP synthase subunit alpha.